Consider the following 357-residue polypeptide: Chorismate synthase (357 aa).

Arg46 contacts NADP(+). Residues 123–125 (RSS), 235–236 (NA), Gly275, 290–294 (KPTPS), and Arg316 each bind FMN.

It belongs to the chorismate synthase family. Homotetramer. Requires FMNH2 as cofactor.

It carries out the reaction 5-O-(1-carboxyvinyl)-3-phosphoshikimate = chorismate + phosphate. It participates in metabolic intermediate biosynthesis; chorismate biosynthesis; chorismate from D-erythrose 4-phosphate and phosphoenolpyruvate: step 7/7. Catalyzes the anti-1,4-elimination of the C-3 phosphate and the C-6 proR hydrogen from 5-enolpyruvylshikimate-3-phosphate (EPSP) to yield chorismate, which is the branch point compound that serves as the starting substrate for the three terminal pathways of aromatic amino acid biosynthesis. This reaction introduces a second double bond into the aromatic ring system. This Sulfurovum sp. (strain NBC37-1) protein is Chorismate synthase.